The chain runs to 279 residues: MKENEKVIMEKGIHTDFKENMTYGEYLQLDSLLSSQKRLSDHHDEMLFIVIHQASELWMKLILHELNAAIESIKQDKLQPAFKMLARVSKIQSQIIQSWDILATLTPSEYIEFRDSLGQASGFQSYQYRMIEYALGYKTPHALKIYEKDPELHARLHTALHAPSLYDVAIQALVKEGFPIHKDVLNRDITQPYEEDATVEAAWLEVYADVKKYWNLYQLAEKLIDIEDWLQQWRFRHMKTVERIIGHKMGTGGSSGVSYLKRVLDQRFFPELWNVRTKL.

Residues 48 to 52, Y110, and R114 each bind substrate; that span reads FIVIH. H237 contacts heme. T251 contributes to the substrate binding site.

The protein belongs to the tryptophan 2,3-dioxygenase family. In terms of assembly, homotetramer. Heme serves as cofactor.

It carries out the reaction L-tryptophan + O2 = N-formyl-L-kynurenine. Its pathway is amino-acid degradation; L-tryptophan degradation via kynurenine pathway; L-kynurenine from L-tryptophan: step 1/2. In terms of biological role, heme-dependent dioxygenase that catalyzes the oxidative cleavage of the L-tryptophan (L-Trp) pyrrole ring and converts L-tryptophan to N-formyl-L-kynurenine. Catalyzes the oxidative cleavage of the indole moiety. The protein is Tryptophan 2,3-dioxygenase of Bacillus thuringiensis (strain Al Hakam).